A 367-amino-acid chain; its full sequence is Histidinol-phosphate aminotransferase (367 aa).

Lys-225 carries the N6-(pyridoxal phosphate)lysine modification.

The protein belongs to the class-II pyridoxal-phosphate-dependent aminotransferase family. Histidinol-phosphate aminotransferase subfamily. Homodimer. It depends on pyridoxal 5'-phosphate as a cofactor.

It catalyses the reaction L-histidinol phosphate + 2-oxoglutarate = 3-(imidazol-4-yl)-2-oxopropyl phosphate + L-glutamate. It functions in the pathway amino-acid biosynthesis; L-histidine biosynthesis; L-histidine from 5-phospho-alpha-D-ribose 1-diphosphate: step 7/9. This is Histidinol-phosphate aminotransferase from Hyphomonas neptunium (strain ATCC 15444).